Consider the following 82-residue polypeptide: Sec-independent protein translocase protein TatA (82 aa).

A helical transmembrane segment spans residues 1–21 (MGSFSIWHWLIVLLVVVMIFG). A disordered region spans residues 39-82 (FKDGMKDGSTTDAPAASSAPAAQVTGQPANSDKSTIDVEARQKS). Residues 51–60 (APAASSAPAA) show a composition bias toward low complexity. Polar residues predominate over residues 62–71 (VTGQPANSDK). Positions 72–82 (STIDVEARQKS) are enriched in basic and acidic residues.

This sequence belongs to the TatA/E family. As to quaternary structure, the Tat system comprises two distinct complexes: a TatABC complex, containing multiple copies of TatA, TatB and TatC subunits, and a separate TatA complex, containing only TatA subunits. Substrates initially bind to the TatABC complex, which probably triggers association of the separate TatA complex to form the active translocon.

Its subcellular location is the cell inner membrane. Functionally, part of the twin-arginine translocation (Tat) system that transports large folded proteins containing a characteristic twin-arginine motif in their signal peptide across membranes. TatA could form the protein-conducting channel of the Tat system. The protein is Sec-independent protein translocase protein TatA of Variovorax paradoxus (strain S110).